The primary structure comprises 337 residues: Hsp90 co-chaperone Cdc37-like 1 (337 aa).

The segment covering 1–11 has biased composition (pro residues); sequence MEQPWPPPGPW. Residues 1 to 42 form a disordered region; the sequence is MEQPWPPPGPWSLPRAEGEAEEENDLDVFPSSPRCPQLPGGS. Residues 2–171 are self-association; sequence EQPWPPPGPW…YEQKIRHFGM (170 aa). S32 and S88 each carry phosphoserine. A coiled-coil region spans residues 85 to 122; that stretch reads NSESLDQEHAKAQIAVSELRQREEEWRQKEEALVQREK. The tract at residues 147–277 is self-association and interaction with Hsp90; the sequence is KDTEDEDKSE…SRVRLYSQSQ (131 aa). The interaction with Hsp70 stretch occupies residues 267 to 337; that stretch reads KSRVRLYSQS…DDEPKMMDTV (71 aa). Residues 278–337 form a required for interaction with STIP1 region; sequence SFQPMTVQNHVPHSGVGSIGLLESLPQNPDYLQYSINTALCSLNSVVHKEDDEPKMMDTV.

This sequence belongs to the CDC37 family. Self-associates. Forms complexes with Hsp70 and Hsp90. Interacts with CDC37, FKBP4, PPID and STIP1.

Its subcellular location is the cytoplasm. Functionally, co-chaperone that binds to numerous proteins and promotes their interaction with Hsp70 and Hsp90. The chain is Hsp90 co-chaperone Cdc37-like 1 (CDC37L1) from Pongo abelii (Sumatran orangutan).